A 262-amino-acid polypeptide reads, in one-letter code: Abhydrolase domain-containing protein AFT2-1 (262 aa).

The Peroxisomal targeting signal type 1 signature appears at 260 to 262 (SKL).

Belongs to the AB hydrolase superfamily. AKT2 hydrolase family.

The protein resides in the peroxisome. The protein operates within mycotoxin biosynthesis. Abhydrolase domain-containing protein; part of the gene clusters that mediate the biosynthesis of the host-selective toxins (HSTs) AF-toxins responsible for Alternaria black spot of strawberry disease by the strawberry pathotype. AF-toxin I and III are valine derivatives of 2,3-dyhydroxy-isovaleric acid and 2-hydroxy-isovaleric acid respectively, while AF II is an isoleucine derivative of 2-hydroxy-valeric acid. These derivatives are bound to a 9,10-epoxy-8-hydroxy-9-methyl-decatrienoic acid (EDA) moiety. On cellular level, AF-toxins affect plasma membrane of susceptible cells and cause a sudden increase in loss of K(+) after a few minutes of toxin treatment. The aldo-keto reductase AFTS1 catalyzes the conversion of 2-keto-isovaleric acid (2-KIV) to 2-hydroxy-isovaleric acid (2-HIV) by reduction of its ketone to an alcohol. The acyl-CoA ligase AFT1, the hydrolase AFT2 and the enoyl-CoA hydratases AFT3 and AFT6, but also the polyketide synthase AFT9, the acyl-CoA dehydrogenase AFT10, the cytochrome P450 monooxygenase AFT11 and the oxidoreductase AFT12 are all involved in the biosynthesis of the AK-, AF- and ACT-toxin common EDA structural moiety. The exact function of each enzyme, and of additional enzymes identified within the AF-toxin clusters have still to be determined. This is Abhydrolase domain-containing protein AFT2-1 from Alternaria alternata (Alternaria rot fungus).